Consider the following 197-residue polypeptide: dTTP/UTP pyrophosphatase (197 aa).

Residue Asp70 is the Proton acceptor of the active site.

This sequence belongs to the Maf family. YhdE subfamily. It depends on a divalent metal cation as a cofactor.

It localises to the cytoplasm. It catalyses the reaction dTTP + H2O = dTMP + diphosphate + H(+). The catalysed reaction is UTP + H2O = UMP + diphosphate + H(+). In terms of biological role, nucleoside triphosphate pyrophosphatase that hydrolyzes dTTP and UTP. May have a dual role in cell division arrest and in preventing the incorporation of modified nucleotides into cellular nucleic acids. The chain is dTTP/UTP pyrophosphatase from Pectobacterium atrosepticum (strain SCRI 1043 / ATCC BAA-672) (Erwinia carotovora subsp. atroseptica).